A 626-amino-acid polypeptide reads, in one-letter code: Transketolase-like protein 2 (626 aa).

Thiamine diphosphate-binding positions include S41, H78, and 124-126; that span reads GSL. Mg(2+) is bound at residue D156. Thiamine diphosphate contacts are provided by G157 and N186. The Mg(2+) site is built by N186 and L188. Residues K248 and H262 each coordinate thiamine diphosphate. Residues H262 and S349 each contribute to the substrate site. Thiamine diphosphate-binding residues include E370 and F396. E370 acts as the Proton donor in catalysis. Substrate is bound by residues H420 and D428. Q432 contributes to the thiamine diphosphate binding site.

The protein belongs to the transketolase family. In terms of assembly, homodimer. The cofactor is Mg(2+). It depends on Ca(2+) as a cofactor. Requires Mn(2+) as cofactor. Co(2+) serves as cofactor. Thiamine diphosphate is required as a cofactor. In terms of tissue distribution, overexpressed in hepatoma cancer cells.

It catalyses the reaction D-sedoheptulose 7-phosphate + D-glyceraldehyde 3-phosphate = aldehydo-D-ribose 5-phosphate + D-xylulose 5-phosphate. Its function is as follows. Plays an essential role in total transketolase activity and cell proliferation in cancer cells; after transfection with anti-TKTL1 siRNA, total transketolase activity dramatically decreases and proliferation was significantly inhibited in cancer cells. Plays a pivotal role in carcinogenesis. The sequence is that of Transketolase-like protein 2 (TKTL2) from Homo sapiens (Human).